Reading from the N-terminus, the 214-residue chain is Probable transaldolase (214 aa).

The active-site Schiff-base intermediate with substrate is Lys83.

This sequence belongs to the transaldolase family. Type 3B subfamily.

The protein resides in the cytoplasm. The catalysed reaction is D-sedoheptulose 7-phosphate + D-glyceraldehyde 3-phosphate = D-erythrose 4-phosphate + beta-D-fructose 6-phosphate. It participates in carbohydrate degradation; pentose phosphate pathway; D-glyceraldehyde 3-phosphate and beta-D-fructose 6-phosphate from D-ribose 5-phosphate and D-xylulose 5-phosphate (non-oxidative stage): step 2/3. In terms of biological role, transaldolase is important for the balance of metabolites in the pentose-phosphate pathway. In Dictyoglomus turgidum (strain DSM 6724 / Z-1310), this protein is Probable transaldolase.